A 456-amino-acid chain; its full sequence is Dihydroorotase (456 aa).

Zn(2+)-binding residues include H60 and H62. Residues H62 to R64 and N94 contribute to the substrate site. Residues E146, H180, H234, and D313 each contribute to the Zn(2+) site. The active site involves D313. H317 is a substrate binding site.

The protein belongs to the metallo-dependent hydrolases superfamily. DHOase family. Class I DHOase subfamily. Zn(2+) is required as a cofactor.

The enzyme catalyses (S)-dihydroorotate + H2O = N-carbamoyl-L-aspartate + H(+). Its pathway is pyrimidine metabolism; UMP biosynthesis via de novo pathway; (S)-dihydroorotate from bicarbonate: step 3/3. Catalyzes the reversible cyclization of carbamoyl aspartate to dihydroorotate. In Methanosarcina mazei (strain ATCC BAA-159 / DSM 3647 / Goe1 / Go1 / JCM 11833 / OCM 88) (Methanosarcina frisia), this protein is Dihydroorotase.